A 487-amino-acid chain; its full sequence is 3-octaprenyl-4-hydroxybenzoate carboxy-lyase (487 aa).

Position 172 (Asn-172) interacts with Mn(2+). Residues 175–177, 189–191, and 194–195 each bind prenylated FMN; these read IYR, RWL, and RG. Glu-238 provides a ligand contact to Mn(2+). Asp-287 functions as the Proton donor in the catalytic mechanism.

This sequence belongs to the UbiD family. As to quaternary structure, homohexamer. It depends on prenylated FMN as a cofactor. Mn(2+) is required as a cofactor.

It localises to the cell membrane. It catalyses the reaction a 4-hydroxy-3-(all-trans-polyprenyl)benzoate + H(+) = a 2-(all-trans-polyprenyl)phenol + CO2. It participates in cofactor biosynthesis; ubiquinone biosynthesis. Catalyzes the decarboxylation of 3-octaprenyl-4-hydroxy benzoate to 2-octaprenylphenol, an intermediate step in ubiquinone biosynthesis. The sequence is that of 3-octaprenyl-4-hydroxybenzoate carboxy-lyase from Blochmanniella pennsylvanica (strain BPEN).